The following is a 291-amino-acid chain: Beta-lactamase CTX-M-14 (291 aa).

The signal sequence occupies residues 1–28; sequence MVTKRVQRMMFAAAACIPLLLGSAPLYA. Ser73 serves as the catalytic Nucleophile; acyl-ester intermediate. A beta-lactam-binding residues include Lys76, Ser133, Glu169, and Ser240.

The protein belongs to the class-A beta-lactamase family. In terms of assembly, monomer.

Its subcellular location is the secreted. The catalysed reaction is a beta-lactam + H2O = a substituted beta-amino acid. Its activity is regulated as follows. Inhibited by the beta-lactamase-blocking agents clavulanic acid, tazobactam and sulbactam. In terms of biological role, extended-spectrum beta-lactamase (ESBL) which confers resistance to penicillins, as well as first, second, and third-generation cephalosporins. Has cefotaxime-hydrolyzing activity. This chain is Beta-lactamase CTX-M-14, found in Escherichia coli.